Consider the following 227-residue polypeptide: ATP synthase F(0) complex subunit a (227 aa).

6 helical membrane-spanning segments follow: residues 12–32 (PCLLGIPLILPSLLLPALLLP), 69–89 (WALLLTSLILMLLSINLLGLL), 98–118 (QLSMNMALALPLWLATLLTGL), 139–159 (IPALIMIETTSLLIRPLALGV), 170–190 (LLIQLISTATIALLPMMPSIS), and 196–216 (ILFLLTILEVAVAMIQAYVFV).

This sequence belongs to the ATPase A chain family. In terms of assembly, component of the ATP synthase complex composed at least of ATP5F1A/subunit alpha, ATP5F1B/subunit beta, ATP5MC1/subunit c (homooctomer), MT-ATP6/subunit a, MT-ATP8/subunit 8, ATP5ME/subunit e, ATP5MF/subunit f, ATP5MG/subunit g, ATP5MK/subunit k, ATP5MJ/subunit j, ATP5F1C/subunit gamma, ATP5F1D/subunit delta, ATP5F1E/subunit epsilon, ATP5PF/subunit F6, ATP5PB/subunit b, ATP5PD/subunit d, ATP5PO/subunit OSCP. ATP synthase complex consists of a soluble F(1) head domain (subunits alpha(3) and beta(3)) - the catalytic core - and a membrane F(0) domain - the membrane proton channel (subunits c, a, 8, e, f, g, k and j). These two domains are linked by a central stalk (subunits gamma, delta, and epsilon) rotating inside the F1 region and a stationary peripheral stalk (subunits F6, b, d, and OSCP). Interacts with DNAJC30; interaction is direct.

The protein localises to the mitochondrion inner membrane. The catalysed reaction is H(+)(in) = H(+)(out). Functionally, subunit a, of the mitochondrial membrane ATP synthase complex (F(1)F(0) ATP synthase or Complex V) that produces ATP from ADP in the presence of a proton gradient across the membrane which is generated by electron transport complexes of the respiratory chain. ATP synthase complex consist of a soluble F(1) head domain - the catalytic core - and a membrane F(1) domain - the membrane proton channel. These two domains are linked by a central stalk rotating inside the F(1) region and a stationary peripheral stalk. During catalysis, ATP synthesis in the catalytic domain of F(1) is coupled via a rotary mechanism of the central stalk subunits to proton translocation. With the subunit c (ATP5MC1), forms the proton-conducting channel in the F(0) domain, that contains two crucial half-channels (inlet and outlet) that facilitate proton movement from the mitochondrial intermembrane space (IMS) into the matrix. Protons are taken up via the inlet half-channel and released through the outlet half-channel, following a Grotthuss mechanism. In Gallus gallus (Chicken), this protein is ATP synthase F(0) complex subunit a.